Reading from the N-terminus, the 147-residue chain is 3-dehydroquinate dehydratase (147 aa).

Tyr-25 (proton acceptor) is an active-site residue. Substrate contacts are provided by Asn-76, His-82, and Asp-89. His-102 (proton donor) is an active-site residue. Residues 103 to 104 (LS) and Arg-113 contribute to the substrate site.

It belongs to the type-II 3-dehydroquinase family. Homododecamer.

The enzyme catalyses 3-dehydroquinate = 3-dehydroshikimate + H2O. It functions in the pathway metabolic intermediate biosynthesis; chorismate biosynthesis; chorismate from D-erythrose 4-phosphate and phosphoenolpyruvate: step 3/7. Catalyzes a trans-dehydration via an enolate intermediate. The protein is 3-dehydroquinate dehydratase of Nostoc sp. (strain PCC 7120 / SAG 25.82 / UTEX 2576).